Here is a 1085-residue protein sequence, read N- to C-terminus: RecBCD enzyme subunit RecC (1085 aa).

The protein belongs to the RecC family. Heterotrimer of RecB, RecC and RecD. All subunits contribute to DNA-binding.

A helicase/nuclease that prepares dsDNA breaks (DSB) for recombinational DNA repair. Binds to DSBs and unwinds DNA via a highly rapid and processive ATP-dependent bidirectional helicase activity. Holoenzyme degrades any linearized DNA that is unable to undergo homologous recombination. In the holoenzyme this subunit recognizes the wild-type Chi sequence, and when added to isolated RecB increases its ATP-dependent helicase processivity. Unlike the case in E.coli, suppresses RecA-dependent homologous recombination, is instead required for single-strand annealing pathway repair of DSB. This Mycolicibacterium smegmatis (strain ATCC 700084 / mc(2)155) (Mycobacterium smegmatis) protein is RecBCD enzyme subunit RecC.